We begin with the raw amino-acid sequence, 427 residues long: Endothelin-1 receptor (427 aa).

A signal peptide spans 1-20 (METFCFRVSFWVALLGCVIS). Over 21 to 80 (DNPESHSTNLSTHVDDFTTFRGTEFSLVVTTHRPTNLALPSNGSMHNYCPQQTKITSAFK) the chain is Extracellular. N-linked (GlcNAc...) asparagine glycans are attached at residues N29 and N62. Residues 81 to 102 (YINTVISCTIFIVGMVGNATLL) form a helical membrane-spanning segment. At 103 to 112 (RIIYQNKCMR) the chain is on the cytoplasmic side. The helical transmembrane segment at 113–132 (NGPNALIASLALGDLIYVVI) threads the bilayer. The Extracellular segment spans residues 133 to 159 (DLPINVFKLLAGRWPFENHDFGVFLCK). C158 and C239 are joined by a disulfide. A helical transmembrane segment spans residues 160–181 (LFPFLQKSSVGITVLNLCALSV). The Cytoplasmic portion of the chain corresponds to 182–205 (DRYRAVASWSRVQGIGIPLVTAIE). The chain crosses the membrane as a helical span at residues 206–229 (IVSIWILSFILAIPEAIGFVMVPF). Topologically, residues 230 to 256 (EYKGEEHKTCMLNATSKFMEFYQDVKD) are extracellular. A helical transmembrane segment spans residues 257–278 (WWLFGFYFCMPLVCTAIFYTLM). At 279–306 (TCEMLNRRNGSLRIALSEHLKQRREVAK) the chain is on the cytoplasmic side. A helical transmembrane segment spans residues 307 to 328 (TVFCLVVIFALCWFPLHLSRIL). At 329 to 347 (KKTVYDEMDKNRCELLSFL) the chain is on the extracellular side. A helical transmembrane segment spans residues 348–372 (LLMDYIGINLATMNSCINPIALYFV). The Cytoplasmic portion of the chain corresponds to 373-427 (SKKFKNCFQSCLCCCCYQSKSLMTSVPMNGTSIQWKNHEQNNHNTERSSHKDSIN). At S425 the chain carries Phosphoserine.

It belongs to the G-protein coupled receptor 1 family. Endothelin receptor subfamily. EDNRA sub-subfamily. In terms of assembly, interacts with HDAC7 and KAT5.

The protein resides in the cell membrane. Its function is as follows. Receptor for endothelin-1. Mediates its action by association with G proteins that activate a phosphatidylinositol-calcium second messenger system. The rank order of binding affinities for ET-A is: ET1 &gt; ET2 &gt;&gt; ET3. In Sus scrofa (Pig), this protein is Endothelin-1 receptor.